Consider the following 390-residue polypeptide: Queuine tRNA-ribosyltransferase (390 aa).

The active-site Proton acceptor is Asp-92. Residues Asp-92–Phe-96, Asp-146, Gln-195, and Gly-222 each bind substrate. The interval Gly-253–Asp-259 is RNA binding. The Nucleophile role is filled by Asp-272. Residues Thr-277–Arg-281 form an RNA binding; important for wobble base 34 recognition region. 4 residues coordinate Zn(2+): Cys-310, Cys-312, Cys-315, and His-354.

This sequence belongs to the queuine tRNA-ribosyltransferase family. Homodimer. Within each dimer, one monomer is responsible for RNA recognition and catalysis, while the other monomer binds to the replacement base PreQ1. It depends on Zn(2+) as a cofactor.

The catalysed reaction is 7-aminomethyl-7-carbaguanine + guanosine(34) in tRNA = 7-aminomethyl-7-carbaguanosine(34) in tRNA + guanine. It functions in the pathway tRNA modification; tRNA-queuosine biosynthesis. Catalyzes the base-exchange of a guanine (G) residue with the queuine precursor 7-aminomethyl-7-deazaguanine (PreQ1) at position 34 (anticodon wobble position) in tRNAs with GU(N) anticodons (tRNA-Asp, -Asn, -His and -Tyr). Catalysis occurs through a double-displacement mechanism. The nucleophile active site attacks the C1' of nucleotide 34 to detach the guanine base from the RNA, forming a covalent enzyme-RNA intermediate. The proton acceptor active site deprotonates the incoming PreQ1, allowing a nucleophilic attack on the C1' of the ribose to form the product. After dissociation, two additional enzymatic reactions on the tRNA convert PreQ1 to queuine (Q), resulting in the hypermodified nucleoside queuosine (7-(((4,5-cis-dihydroxy-2-cyclopenten-1-yl)amino)methyl)-7-deazaguanosine). This chain is Queuine tRNA-ribosyltransferase, found in Acidovorax ebreus (strain TPSY) (Diaphorobacter sp. (strain TPSY)).